The primary structure comprises 956 residues: DNA replication helicase (956 aa).

120 to 127 (GTAGAGKT) lines the ATP pocket. Residues 658 to 694 (PINNHVDADSSQGGQSVPVSQRMEHGQEETHDIPCLS) form a disordered region. Low complexity predominate over residues 667–678 (SSQGGQSVPVSQ). Residues 679–694 (RMEHGQEETHDIPCLS) show a composition bias toward basic and acidic residues.

This sequence belongs to the herpesviridae helicase family. As to quaternary structure, associates with the primase and the primase-associated factor to form the helicase-primase complex.

It localises to the host nucleus. Component of the helicase/primase complex. Unwinds the DNA at the replication forks and generates single-stranded DNA for both leading and lagging strand synthesis. The primase synthesizes short RNA primers on the lagging strand that the polymerase elongates using dNTPs. Possesses helicase-like motifs and therefore may act as the helicase subunit of the complex. This chain is DNA replication helicase, found in Human cytomegalovirus (strain Merlin) (HHV-5).